A 156-amino-acid chain; its full sequence is ATP synthase subunit b (156 aa).

The chain crosses the membrane as a helical span at residues 7–27 (LIGQLIAFALFVAFCMKFVWP).

This sequence belongs to the ATPase B chain family. As to quaternary structure, F-type ATPases have 2 components, F(1) - the catalytic core - and F(0) - the membrane proton channel. F(1) has five subunits: alpha(3), beta(3), gamma(1), delta(1), epsilon(1). F(0) has three main subunits: a(1), b(2) and c(10-14). The alpha and beta chains form an alternating ring which encloses part of the gamma chain. F(1) is attached to F(0) by a central stalk formed by the gamma and epsilon chains, while a peripheral stalk is formed by the delta and b chains.

It is found in the cell inner membrane. Functionally, f(1)F(0) ATP synthase produces ATP from ADP in the presence of a proton or sodium gradient. F-type ATPases consist of two structural domains, F(1) containing the extramembraneous catalytic core and F(0) containing the membrane proton channel, linked together by a central stalk and a peripheral stalk. During catalysis, ATP synthesis in the catalytic domain of F(1) is coupled via a rotary mechanism of the central stalk subunits to proton translocation. Its function is as follows. Component of the F(0) channel, it forms part of the peripheral stalk, linking F(1) to F(0). The polypeptide is ATP synthase subunit b (Actinobacillus pleuropneumoniae serotype 5b (strain L20)).